The following is a 526-amino-acid chain: ATP synthase subunit alpha 2 (526 aa).

171-178 (GDRQTGKT) contacts ATP.

Belongs to the ATPase alpha/beta chains family. In terms of assembly, F-type ATPases have 2 components, CF(1) - the catalytic core - and CF(0) - the membrane proton channel. CF(1) has five subunits: alpha(3), beta(3), gamma(1), delta(1), epsilon(1). CF(0) has four main subunits: a(1), b(1), b'(1) and c(9-12).

It is found in the cell inner membrane. The enzyme catalyses ATP + H2O + 4 H(+)(in) = ADP + phosphate + 5 H(+)(out). Its function is as follows. Produces ATP from ADP in the presence of a proton gradient across the membrane. The alpha chain is a regulatory subunit. In Chlorobium luteolum (strain DSM 273 / BCRC 81028 / 2530) (Pelodictyon luteolum), this protein is ATP synthase subunit alpha 2.